The sequence spans 250 residues: Proteasome subunit alpha (250 aa).

It belongs to the peptidase T1A family. As to quaternary structure, the 20S proteasome core is composed of 14 alpha and 14 beta subunits that assemble into four stacked heptameric rings, resulting in a barrel-shaped structure. The two inner rings, each composed of seven catalytic beta subunits, are sandwiched by two outer rings, each composed of seven alpha subunits. The catalytic chamber with the active sites is on the inside of the barrel. Has a gated structure, the ends of the cylinder being occluded by the N-termini of the alpha-subunits. Is capped at one or both ends by the proteasome regulatory ATPase, PAN.

Its subcellular location is the cytoplasm. With respect to regulation, the formation of the proteasomal ATPase PAN-20S proteasome complex, via the docking of the C-termini of PAN into the intersubunit pockets in the alpha-rings, triggers opening of the gate for substrate entry. Interconversion between the open-gate and close-gate conformations leads to a dynamic regulation of the 20S proteasome proteolysis activity. In terms of biological role, component of the proteasome core, a large protease complex with broad specificity involved in protein degradation. The chain is Proteasome subunit alpha from Haloquadratum walsbyi (strain DSM 16790 / HBSQ001).